Here is an 81-residue protein sequence, read N- to C-terminus: Photosystem I iron-sulfur center (81 aa).

4Fe-4S ferredoxin-type domains are found at residues 2 to 31 (AHSV…MVPW) and 39 to 68 (IASA…VRVY). [4Fe-4S] cluster contacts are provided by Cys11, Cys14, Cys17, Cys21, Cys48, Cys51, Cys54, and Cys58.

As to quaternary structure, the eukaryotic PSI reaction center is composed of at least 11 subunits. [4Fe-4S] cluster is required as a cofactor.

Its subcellular location is the plastid. The protein localises to the chloroplast thylakoid membrane. The enzyme catalyses reduced [plastocyanin] + hnu + oxidized [2Fe-2S]-[ferredoxin] = oxidized [plastocyanin] + reduced [2Fe-2S]-[ferredoxin]. Functionally, apoprotein for the two 4Fe-4S centers FA and FB of photosystem I (PSI); essential for photochemical activity. FB is the terminal electron acceptor of PSI, donating electrons to ferredoxin. The C-terminus interacts with PsaA/B/D and helps assemble the protein into the PSI complex. Required for binding of PsaD and PsaE to PSI. PSI is a plastocyanin/cytochrome c6-ferredoxin oxidoreductase, converting photonic excitation into a charge separation, which transfers an electron from the donor P700 chlorophyll pair to the spectroscopically characterized acceptors A0, A1, FX, FA and FB in turn. The polypeptide is Photosystem I iron-sulfur center (Pyropia yezoensis (Susabi-nori)).